A 431-amino-acid polypeptide reads, in one-letter code: Glutamate--tRNA ligase 1 (431 aa).

A 'HIGH' region motif is present at residues 6-16 (PSPTGDMHIGN). Residues 235-239 (KMSKR) carry the 'KMSKS' region motif. Position 238 (lysine 238) interacts with ATP.

Belongs to the class-I aminoacyl-tRNA synthetase family. Glutamate--tRNA ligase type 1 subfamily. As to quaternary structure, monomer.

It is found in the cytoplasm. It catalyses the reaction tRNA(Glu) + L-glutamate + ATP = L-glutamyl-tRNA(Glu) + AMP + diphosphate. Its function is as follows. Catalyzes the attachment of glutamate to tRNA(Glu) in a two-step reaction: glutamate is first activated by ATP to form Glu-AMP and then transferred to the acceptor end of tRNA(Glu). The polypeptide is Glutamate--tRNA ligase 1 (Campylobacter concisus (strain 13826)).